A 281-amino-acid polypeptide reads, in one-letter code: Diaminopimelate epimerase (281 aa).

Substrate is bound by residues Asn13, Gln51, and Asn70. Catalysis depends on Cys79, which acts as the Proton donor. Substrate-binding positions include 80–81 (GN), Asn163, Asn196, and 214–215 (ER). The active-site Proton acceptor is Cys223. Position 224–225 (224–225 (GS)) interacts with substrate.

The protein belongs to the diaminopimelate epimerase family. Homodimer.

The protein resides in the cytoplasm. It catalyses the reaction (2S,6S)-2,6-diaminopimelate = meso-2,6-diaminopimelate. The protein operates within amino-acid biosynthesis; L-lysine biosynthesis via DAP pathway; DL-2,6-diaminopimelate from LL-2,6-diaminopimelate: step 1/1. Catalyzes the stereoinversion of LL-2,6-diaminopimelate (L,L-DAP) to meso-diaminopimelate (meso-DAP), a precursor of L-lysine and an essential component of the bacterial peptidoglycan. This is Diaminopimelate epimerase from Alcanivorax borkumensis (strain ATCC 700651 / DSM 11573 / NCIMB 13689 / SK2).